A 352-amino-acid chain; its full sequence is Probable tyrosine-protein kinase DDB_G0290471 (352 aa).

The Protein kinase domain maps to 51 to 333 (IEYVCRLGSG…ISLNQIRSFY (283 aa)). ATP is bound by residues 57-65 (LGSGSLCRV) and Lys-78. Asp-175 (proton acceptor) is an active-site residue.

It belongs to the protein kinase superfamily. TKL Tyr protein kinase family.

It carries out the reaction L-tyrosyl-[protein] + ATP = O-phospho-L-tyrosyl-[protein] + ADP + H(+). The chain is Probable tyrosine-protein kinase DDB_G0290471 from Dictyostelium discoideum (Social amoeba).